Reading from the N-terminus, the 739-residue chain is Phosphoribosylformylglycinamidine synthase subunit PurL (739 aa).

His54 is an active-site residue. The ATP site is built by Tyr57 and Lys96. Residue Glu98 participates in Mg(2+) binding. Substrate contacts are provided by residues 99-102 (SHNH) and Arg121. The Proton acceptor role is filled by His100. Asp122 serves as a coordination point for Mg(2+). Gln245 is a binding site for substrate. Asp273 provides a ligand contact to Mg(2+). 317-319 (ESQ) lines the substrate pocket. ATP-binding residues include Asp500 and Gly537. A Mg(2+)-binding site is contributed by Asn538. Residue Ser540 participates in substrate binding.

It belongs to the FGAMS family. As to quaternary structure, monomer. Part of the FGAM synthase complex composed of 1 PurL, 1 PurQ and 2 PurS subunits.

It localises to the cytoplasm. The catalysed reaction is N(2)-formyl-N(1)-(5-phospho-beta-D-ribosyl)glycinamide + L-glutamine + ATP + H2O = 2-formamido-N(1)-(5-O-phospho-beta-D-ribosyl)acetamidine + L-glutamate + ADP + phosphate + H(+). Its pathway is purine metabolism; IMP biosynthesis via de novo pathway; 5-amino-1-(5-phospho-D-ribosyl)imidazole from N(2)-formyl-N(1)-(5-phospho-D-ribosyl)glycinamide: step 1/2. Its function is as follows. Part of the phosphoribosylformylglycinamidine synthase complex involved in the purines biosynthetic pathway. Catalyzes the ATP-dependent conversion of formylglycinamide ribonucleotide (FGAR) and glutamine to yield formylglycinamidine ribonucleotide (FGAM) and glutamate. The FGAM synthase complex is composed of three subunits. PurQ produces an ammonia molecule by converting glutamine to glutamate. PurL transfers the ammonia molecule to FGAR to form FGAM in an ATP-dependent manner. PurS interacts with PurQ and PurL and is thought to assist in the transfer of the ammonia molecule from PurQ to PurL. The sequence is that of Phosphoribosylformylglycinamidine synthase subunit PurL from Bacillus cereus (strain ATCC 10987 / NRS 248).